Here is a 214-residue protein sequence, read N- to C-terminus: Thymidylate kinase (214 aa).

10–17 contributes to the ATP binding site; it reads GPDGAGKT.

This sequence belongs to the thymidylate kinase family.

It carries out the reaction dTMP + ATP = dTDP + ADP. Phosphorylation of dTMP to form dTDP in both de novo and salvage pathways of dTTP synthesis. The chain is Thymidylate kinase from Latilactobacillus sakei subsp. sakei (strain 23K) (Lactobacillus sakei subsp. sakei).